A 299-amino-acid chain; its full sequence is Putative arsenical pump-driving ATPase 2 (299 aa).

8 to 15 serves as a coordination point for ATP; that stretch reads GKGGVGKT.

The protein belongs to the arsA ATPase family.

The catalysed reaction is arsenite(in) + ATP + H2O = arsenite(out) + ADP + phosphate + H(+). Its function is as follows. Anion-transporting ATPase. Catalyzes the extrusion of arsenite. In Aquifex aeolicus (strain VF5), this protein is Putative arsenical pump-driving ATPase 2 (arsA2).